The primary structure comprises 379 residues: Adenylosuccinate synthetase (379 aa).

Residues 11-17 and 39-41 each bind GTP; these read GDEGKGK and GHT. Residue Asp-12 is the Proton acceptor of the active site. Mg(2+)-binding residues include Asp-12 and Gly-39. IMP-binding positions include 12-15, 37-40, Thr-127, Arg-141, Gln-223, Thr-238, and Arg-302; these read DEGK and NAGH. His-40 serves as the catalytic Proton donor. Position 298–304 (298–304) interacts with substrate; the sequence is TTTGRGR. Residues Arg-304 and 330-332 contribute to the GTP site; that span reads KLD.

It belongs to the adenylosuccinate synthetase family. As to quaternary structure, homodimer. It depends on Mg(2+) as a cofactor.

It is found in the cytoplasm. The catalysed reaction is IMP + L-aspartate + GTP = N(6)-(1,2-dicarboxyethyl)-AMP + GDP + phosphate + 2 H(+). It functions in the pathway purine metabolism; AMP biosynthesis via de novo pathway; AMP from IMP: step 1/2. Functionally, plays an important role in the de novo pathway of purine nucleotide biosynthesis. Catalyzes the first committed step in the biosynthesis of AMP from IMP. The sequence is that of Adenylosuccinate synthetase from Methanosarcina mazei (strain ATCC BAA-159 / DSM 3647 / Goe1 / Go1 / JCM 11833 / OCM 88) (Methanosarcina frisia).